Consider the following 156-residue polypeptide: ATP synthase subunit b (156 aa).

Residues 7–29 traverse the membrane as a helical segment; the sequence is LFAQMVVFLVLAWFTMKFVWPPL.

Belongs to the ATPase B chain family. F-type ATPases have 2 components, F(1) - the catalytic core - and F(0) - the membrane proton channel. F(1) has five subunits: alpha(3), beta(3), gamma(1), delta(1), epsilon(1). F(0) has three main subunits: a(1), b(2) and c(10-14). The alpha and beta chains form an alternating ring which encloses part of the gamma chain. F(1) is attached to F(0) by a central stalk formed by the gamma and epsilon chains, while a peripheral stalk is formed by the delta and b chains.

The protein resides in the cell inner membrane. Functionally, f(1)F(0) ATP synthase produces ATP from ADP in the presence of a proton or sodium gradient. F-type ATPases consist of two structural domains, F(1) containing the extramembraneous catalytic core and F(0) containing the membrane proton channel, linked together by a central stalk and a peripheral stalk. During catalysis, ATP synthesis in the catalytic domain of F(1) is coupled via a rotary mechanism of the central stalk subunits to proton translocation. Component of the F(0) channel, it forms part of the peripheral stalk, linking F(1) to F(0). The protein is ATP synthase subunit b of Burkholderia multivorans (strain ATCC 17616 / 249).